A 124-amino-acid polypeptide reads, in one-letter code: Secretion system apparatus protein SsaP (124 aa).

In Salmonella typhi, this protein is Secretion system apparatus protein SsaP (ssaP).